The chain runs to 731 residues: Autophagy-related protein 20 (731 aa).

The segment covering 1–22 (MSSVLRNQDNPPTISEVSSTTK) has biased composition (polar residues). Residues 1-130 (MSSVLRNQDN…NNKSNNVSRV (130 aa)) are disordered. The span at 31–41 (KQEEKEKEKEI) shows a compositional bias: basic and acidic residues. Polar residues predominate over residues 69–82 (SFMTANSFNEGPNT). Low complexity-rich tracts occupy residues 92–102 (NNNSSSNNNRG) and 113–128 (LLLYNTSNNNKSNNVS). The PX domain maps to 164-340 (IQITEAGNSN…KFLDPNANWG (177 aa)). The a 1,2-diacyl-sn-glycero-3-phospho-(1D-myo-inositol-3-phosphate) site is built by Arg205, Ser207, and Lys231. A disordered region spans residues 253-277 (SVAGSNGNSGGSGGGGASGGAGSGS). The segment covering 259–277 (GNSGGSGGGGASGGAGSGS) has biased composition (gly residues). Residue Arg306 participates in a 1,2-diacyl-sn-glycero-3-phospho-(1D-myo-inositol-3-phosphate) binding. The tract at residues 586 to 626 (NSQVKPKNGKYNLEQQQSSTVSPAPPPGPPPSSSSSSSSSS) is disordered. The segment covering 608 to 617 (PAPPPGPPPS) has biased composition (pro residues).

This sequence belongs to the sorting nexin family.

The protein localises to the endosome membrane. It localises to the preautophagosomal structure membrane. Required for cytoplasm to vacuole transport (Cvt), pexophagy and mitophagy. Also involved in endoplasmic reticulum-specific autophagic process and is essential for the survival of cells subjected to severe ER stress. Functions in protein retrieval from the endocytic pathway. This Candida albicans (strain SC5314 / ATCC MYA-2876) (Yeast) protein is Autophagy-related protein 20 (ATG20).